The sequence spans 424 residues: Serine--tRNA ligase (424 aa).

228–230 lines the L-serine pocket; the sequence is TAE. ATP is bound at residue 259-261; the sequence is RSE. Glu-282 provides a ligand contact to L-serine. 346–349 is an ATP binding site; it reads EISS. Ser-382 serves as a coordination point for L-serine.

The protein belongs to the class-II aminoacyl-tRNA synthetase family. Type-1 seryl-tRNA synthetase subfamily. As to quaternary structure, homodimer. The tRNA molecule binds across the dimer.

The protein resides in the cytoplasm. It carries out the reaction tRNA(Ser) + L-serine + ATP = L-seryl-tRNA(Ser) + AMP + diphosphate + H(+). The enzyme catalyses tRNA(Sec) + L-serine + ATP = L-seryl-tRNA(Sec) + AMP + diphosphate + H(+). It participates in aminoacyl-tRNA biosynthesis; selenocysteinyl-tRNA(Sec) biosynthesis; L-seryl-tRNA(Sec) from L-serine and tRNA(Sec): step 1/1. Catalyzes the attachment of serine to tRNA(Ser). Is also able to aminoacylate tRNA(Sec) with serine, to form the misacylated tRNA L-seryl-tRNA(Sec), which will be further converted into selenocysteinyl-tRNA(Sec). The protein is Serine--tRNA ligase of Rhodospirillum centenum (strain ATCC 51521 / SW).